The primary structure comprises 263 residues: ATP synthase subunit delta (263 aa).

Belongs to the ATPase delta chain family. As to quaternary structure, F-type ATPases have 2 components, F(1) - the catalytic core - and F(0) - the membrane proton channel. F(1) has five subunits: alpha(3), beta(3), gamma(1), delta(1), epsilon(1). F(0) has three main subunits: a(1), b(2) and c(10-14). The alpha and beta chains form an alternating ring which encloses part of the gamma chain. F(1) is attached to F(0) by a central stalk formed by the gamma and epsilon chains, while a peripheral stalk is formed by the delta and b chains.

Its subcellular location is the cell membrane. Its function is as follows. F(1)F(0) ATP synthase produces ATP from ADP in the presence of a proton or sodium gradient. F-type ATPases consist of two structural domains, F(1) containing the extramembraneous catalytic core and F(0) containing the membrane proton channel, linked together by a central stalk and a peripheral stalk. During catalysis, ATP synthesis in the catalytic domain of F(1) is coupled via a rotary mechanism of the central stalk subunits to proton translocation. Functionally, this protein is part of the stalk that links CF(0) to CF(1). It either transmits conformational changes from CF(0) to CF(1) or is implicated in proton conduction. This chain is ATP synthase subunit delta, found in Cutibacterium acnes (strain DSM 16379 / KPA171202) (Propionibacterium acnes).